Here is a 195-residue protein sequence, read N- to C-terminus: Large ribosomal subunit protein mL58 (195 aa).

A mitochondrion-targeting transit peptide spans 1–18; it reads MIGRGVCCRSFHTAGSAW.

It belongs to the mitochondrion-specific ribosomal protein mL58 family. Component of the mitochondrial large ribosomal subunit (mt-LSU). Mature yeast 74S mitochondrial ribosomes consist of a small (37S) and a large (54S) subunit. The 37S small subunit contains a 15S ribosomal RNA (15S mt-rRNA) and 34 different proteins. The 54S large subunit contains a 21S rRNA (21S mt-rRNA) and 46 different proteins.

Its subcellular location is the mitochondrion. In terms of biological role, component of the mitochondrial ribosome (mitoribosome), a dedicated translation machinery responsible for the synthesis of mitochondrial genome-encoded proteins, including at least some of the essential transmembrane subunits of the mitochondrial respiratory chain. The mitoribosomes are attached to the mitochondrial inner membrane and translation products are cotranslationally integrated into the membrane. The sequence is that of Large ribosomal subunit protein mL58 (MRPL20) from Saccharomyces cerevisiae (strain ATCC 204508 / S288c) (Baker's yeast).